The sequence spans 60 residues: Small, acid-soluble spore protein H 1 (60 aa).

The tract at residues I39–S60 is disordered.

The protein belongs to the SspH family.

The protein localises to the spore core. The chain is Small, acid-soluble spore protein H 1 from Geobacillus kaustophilus (strain HTA426).